Reading from the N-terminus, the 548-residue chain is Mercuric reductase (548 aa).

The region spanning methionine 1 to serine 65 is the HMA domain. Positions 11 and 14 each coordinate a metal cation. Positions 97, 117, and 122 each coordinate FAD. Cysteine 123 and cysteine 128 are oxidised to a cystine. FAD-binding residues include lysine 132, alanine 198, aspartate 390, and valine 398. Residues cysteine 545 and cysteine 546 each contribute to the Hg(2+) site.

This sequence belongs to the class-I pyridine nucleotide-disulfide oxidoreductase family. Homodimer. FAD serves as cofactor.

It catalyses the reaction Hg + NADP(+) + H(+) = Hg(2+) + NADPH. Resistance to Hg(2+) in bacteria appears to be governed by a specialized system which includes mercuric reductase. MerA protein is responsible for volatilizing mercury as Hg(0). The chain is Mercuric reductase (merA) from Pseudomonas fluorescens.